A 135-amino-acid polypeptide reads, in one-letter code: Small ribosomal subunit protein uS12 (135 aa).

Asp-89 bears the 3-methylthioaspartic acid mark. A disordered region spans residues 108-135; it reads NKRTVSRSKYGTKKAKATDKKATDNKKK. Basic residues predominate over residues 111–122; it reads TVSRSKYGTKKA. Over residues 123 to 135 the composition is skewed to basic and acidic residues; that stretch reads KATDKKATDNKKK.

Belongs to the universal ribosomal protein uS12 family. As to quaternary structure, part of the 30S ribosomal subunit. Contacts proteins S8 and S17. May interact with IF1 in the 30S initiation complex.

With S4 and S5 plays an important role in translational accuracy. Functionally, interacts with and stabilizes bases of the 16S rRNA that are involved in tRNA selection in the A site and with the mRNA backbone. Located at the interface of the 30S and 50S subunits, it traverses the body of the 30S subunit contacting proteins on the other side and probably holding the rRNA structure together. The combined cluster of proteins S8, S12 and S17 appears to hold together the shoulder and platform of the 30S subunit. This chain is Small ribosomal subunit protein uS12, found in Helicobacter pylori (strain P12).